Here is a 93-residue protein sequence, read N- to C-terminus: Phosphoribosyl-ATP pyrophosphatase (93 aa).

Belongs to the PRA-PH family.

Its subcellular location is the cytoplasm. The enzyme catalyses 1-(5-phospho-beta-D-ribosyl)-ATP + H2O = 1-(5-phospho-beta-D-ribosyl)-5'-AMP + diphosphate + H(+). Its pathway is amino-acid biosynthesis; L-histidine biosynthesis; L-histidine from 5-phospho-alpha-D-ribose 1-diphosphate: step 2/9. This chain is Phosphoribosyl-ATP pyrophosphatase, found in Mycobacterium sp. (strain JLS).